We begin with the raw amino-acid sequence, 93 residues long: Protein S100-A5 (93 aa).

EF-hand domains are found at residues 12–47 (MVTT…LAEK) and 48–83 (MKES…LCMA). Ca(2+)-binding residues include threonine 28, glutamate 33, aspartate 61, asparagine 63, aspartate 65, glutamate 67, and glutamate 72.

Belongs to the S-100 family. As to quaternary structure, homodimer.

Functionally, binds calcium, zinc and copper. One subunit can simultaneously bind 2 calcium ions or 2 copper ions plus 1 zinc ion. Calcium and copper ions compete for the same binding sites. The chain is Protein S100-A5 (S100a5) from Mus musculus (Mouse).